The chain runs to 325 residues: UPF0164 protein TP_0856 (325 aa).

Positions 1–28 (MVHYKSVFYKSAALVCGFVLAGASVAIA) are cleaved as a signal peptide.

This sequence belongs to the UPF0164 family.

The chain is UPF0164 protein TP_0856 from Treponema pallidum (strain Nichols).